We begin with the raw amino-acid sequence, 411 residues long: Phospholipase ABHD3 (411 aa).

Residues 25–45 traverse the membrane as a helical; Signal-anchor for type II membrane protein segment; the sequence is VGFFGSGVGFSLILGFSVAYA. In terms of domain architecture, AB hydrolase-1 spans 140–247; the sequence is PTVLLLPGLT…PLKAAATFSV (108 aa). Catalysis depends on charge relay system residues serine 220, aspartate 346, and histidine 375.

It belongs to the AB hydrolase superfamily. AB hydrolase 4 family.

The protein localises to the membrane. The enzyme catalyses a 1,2-diacyl-sn-glycero-3-phosphocholine + H2O = a 1-acyl-sn-glycero-3-phosphocholine + a fatty acid + H(+). The catalysed reaction is a 1,2-diacyl-sn-glycero-3-phosphocholine + H2O = a 2-acyl-sn-glycero-3-phosphocholine + a fatty acid + H(+). It carries out the reaction 1-tetradecanoyl-2-(9Z,12Z-octadecadienoyl)-sn-glycero-3-phosphocholine + H2O = 2-(9Z,12Z-octadecadienoyl)-sn-glycero-3-phosphocholine + tetradecanoate + H(+). It catalyses the reaction 1-tetradecanoyl-2-(9Z,12Z-octadecadienoyl)-sn-glycero-3-phosphocholine + H2O = 1-tetradecanoyl-sn-glycero-3-phosphocholine + (9Z,12Z)-octadecadienoate + H(+). The enzyme catalyses 1-tetradecanoyl-2-(5Z,8Z,11Z,14Z-eicosatetraenoyl)-sn-glycero-3-phosphocholine + H2O = 2-(5Z,8Z,11Z,14Z)-eicosatetraenoyl-sn-glycero-3-phosphocholine + tetradecanoate + H(+). The catalysed reaction is 1-tetradecanoyl-2-(4Z,7Z,10Z,13Z,16Z,19Z-docosahexaenoyl)-sn-glycero-3-phosphocholine + H2O = 2-(4Z,7Z,10Z,13Z,16Z,19Z-docosahexaenoyl)-sn-glycero-3-phosphocholine + tetradecanoate + H(+). It carries out the reaction 1,2-ditetradecanoyl-sn-glycero-3-phosphocholine + H2O = 2-tetradecanoyl-sn-glycero-3-phosphocholine + tetradecanoate + H(+). It catalyses the reaction 1-octadecanoyl-2-acetyl-sn-glycero-3-phosphocholine + H2O = 1-octadecanoyl-sn-glycero-3-phosphocholine + acetate + H(+). The enzyme catalyses 1,2-ditetradecanoyl-sn-glycero-3-phosphocholine + H2O = 1-tetradecanoyl-sn-glycero-3-phosphocholine + tetradecanoate + H(+). The catalysed reaction is 1-octadecanoyl-2-pentanoyl-sn-glycero-3-phosphocholine + H2O = pentanoate + 1-octadecanoyl-sn-glycero-3-phosphocholine + H(+). It carries out the reaction 1-octadecanoyl-2-hexanoyl-sn-glycero-3-phosphocholine + H2O = hexanoate + 1-octadecanoyl-sn-glycero-3-phosphocholine + H(+). It catalyses the reaction 1-octadecanoyl-2-octanoyl-sn-glycero-3-phosphocholine + H2O = 1-octadecanoyl-sn-glycero-3-phosphocholine + octanoate + H(+). The enzyme catalyses 1-octadecanoyl-2-nonanoyl-sn-glycero-3-phosphocholine + H2O = nonanoate + 1-octadecanoyl-sn-glycero-3-phosphocholine + H(+). The catalysed reaction is 1-O-hexadecyl-2-nonadioyl-sn-glycero-3-phosphocholine + H2O = nonanedioate + 1-O-hexadecyl-sn-glycero-3-phosphocholine + H(+). It carries out the reaction 1-hexadecanoyl-2-nonadioyl-sn-glycero-3-phosphocholine + H2O = nonanedioate + 1-hexadecanoyl-sn-glycero-3-phosphocholine + H(+). It catalyses the reaction 1-hexadecanoyl-2-(9-oxononanoyl)-sn-glycero-3-phosphocholine + H2O = 9-oxononanoate + 1-hexadecanoyl-sn-glycero-3-phosphocholine + H(+). The enzyme catalyses 1-hexadecanoyl-2-(5-oxopentanoyl)-sn-glycero-3-phosphocholine + H2O = 5-oxopentanoate + 1-hexadecanoyl-sn-glycero-3-phosphocholine + H(+). The catalysed reaction is 1-hexadecanoyl-2-glutaroyl-sn-glycero-3-phosphocholine + H2O = glutarate + 1-hexadecanoyl-sn-glycero-3-phosphocholine + H(+). It carries out the reaction 1-O-hexadecyl-2-acetyl-sn-glycero-3-phosphocholine + H2O = 1-O-hexadecyl-sn-glycero-3-phosphocholine + acetate + H(+). In terms of biological role, phospholipase that may play a role in phospholipids remodeling. May selectively cleave myristate (C14)-containing phosphatidylcholines through its predominant phospholipase 1 activity, cleaving preferentially acyl groups in sn1 position. In parallel, may have a minor phospholipase 2 activity acting on acyl groups in position sn2. In addition to (C14)-containing phosphatidylcholines, may also act on other medium-chain-containing and oxidatively truncated phospholipids. The sequence is that of Phospholipase ABHD3 from Bos taurus (Bovine).